A 774-amino-acid chain; its full sequence is Protein translocase subunit SecA 2 (774 aa).

Residues Q94, 112-116 (GEGKT), and D501 each bind ATP.

Belongs to the SecA family. In terms of assembly, monomer and homodimer. Part of the essential Sec protein translocation apparatus which comprises SecA, SecYEG and auxiliary proteins SecDF. Other proteins may also be involved.

The protein localises to the cell membrane. It is found in the cytoplasm. It carries out the reaction ATP + H2O + cellular proteinSide 1 = ADP + phosphate + cellular proteinSide 2.. In terms of biological role, part of the Sec protein translocase complex. Interacts with the SecYEG preprotein conducting channel. Has a central role in coupling the hydrolysis of ATP to the transfer of proteins into and across the cell membrane, serving as an ATP-driven molecular motor driving the stepwise translocation of polypeptide chains across the membrane. This Mycobacterium sp. (strain JLS) protein is Protein translocase subunit SecA 2.